Here is a 100-residue protein sequence, read N- to C-terminus: Sodium-influx-stimulating peptide (100 aa).

Residues Met1–Ser23 form the signal peptide.

Post-translationally, three disulfide bonds are present. Expressed by the yellow cells, peptidergic (neuroendocrine) neurons of the central nervous system.

Functionally, stimulates integumental Na(+) uptake. Controls the activity of sodium pumps in the integument, pericardium, ureter and nephridial gland. The protein is Sodium-influx-stimulating peptide (SIS) of Lymnaea stagnalis (Great pond snail).